The chain runs to 867 residues: MAASSSSSASASAMGGGGMRKAPSMEWRWVSTEEDDEGEEDGDTVEAAAAAVGAVGRGGSFGSEEEEDEEDGGGGGEGEGEGEDGEKQKLIRTVPSVDWFDVEGYEVSVAQHIEDSEEFDFGRTMFLALQTLAVVFGDIGISPLYTFDVMFSKYPILGEEDVLGALSLVLYTLISMPLVKYVLVVLWANDDGEGGIFALYSLICRNAKVSLIPNQVHSEKRMSSFRLKLPTPELERSIKVKEKLESSLLLKKLLLGLVLFGTAMFISNGVITPAMSVLSAVSGLKVGIPNASQGLVVMISVVLLVILYSVQRYATSKMGFALGPSLLIWFCCLGGIGIYNLSTYGPAAFKAFNPLYIIYYFGRNPFQAWLSLAGCLLCATGSEAIFANLSYFPVRYVQSMFALLVLPCLVLAYLGQGAFLIANQNSSEQIFFSSIPSGVFWPVFLIANLAALIASRTMTTAIFQCLKQSIALGCFPRLKIIHTSRKFMAKIYIPVVNWFLLFSCLGFILLFRSIYDVGNAYAIAELGVMIMATVYVTIIMLLIWETSIVKVLSFVITFLSLELVFFSSSLSSVGDGGWALIIFASGILMVMFIWNYGSKLKYDSEVKKKLSKDLMRKLGPNLGTIRAPGLGLVYSEIVKGVPAIFGHFLIALPAIHSIIVFVCIRNVPVPVVPQTERFLFQRVCTRGYHMFRCIARYGYKDKNQESQSTFERLLIEGLEKFIQREAVELSLQSGDDIDSDEEPPTPSRTIVAPNGSLYSLDVPLLADFVPSAEVIPEASCSTPQHDPVVDYTQNLELELAFIRQAKQSGAVYLIDNPIVKARKNSWFFKKLIINYFFAFLRNNCRRAMMSMSIPHTNVMQVRLTSYV.

Over residues 1–13 the composition is skewed to low complexity; it reads MAASSSSSASASA. The disordered stretch occupies residues 1–88; the sequence is MAASSSSSAS…EGEGEDGEKQ (88 aa). Topologically, residues 1 to 124 are cytoplasmic; that stretch reads MAASSSSSAS…DSEEFDFGRT (124 aa). Acidic residues predominate over residues 32-44; that stretch reads TEEDDEGEEDGDT. Positions 45-54 are enriched in low complexity; sequence VEAAAAAVGA. Residues 63 to 84 show a composition bias toward acidic residues; it reads SEEEEDEEDGGGGGEGEGEGED. Residues 125 to 145 traverse the membrane as a helical segment; that stretch reads MFLALQTLAVVFGDIGISPLY. Over 146-167 the chain is Extracellular; sequence TFDVMFSKYPILGEEDVLGALS. A helical transmembrane segment spans residues 168-188; sequence LVLYTLISMPLVKYVLVVLWA. Topologically, residues 189 to 252 are cytoplasmic; sequence NDDGEGGIFA…KLESSLLLKK (64 aa). Residues 253-273 form a helical membrane-spanning segment; sequence LLLGLVLFGTAMFISNGVITP. The Extracellular segment spans residues 274–285; it reads AMSVLSAVSGLK. The chain crosses the membrane as a helical span at residues 286–306; that stretch reads VGIPNASQGLVVMISVVLLVI. The Cytoplasmic segment spans residues 307-317; it reads LYSVQRYATSK. The chain crosses the membrane as a helical span at residues 318 to 338; it reads MGFALGPSLLIWFCCLGGIGI. The Extracellular portion of the chain corresponds to 339–365; it reads YNLSTYGPAAFKAFNPLYIIYYFGRNP. A glycan (N-linked (GlcNAc...) asparagine) is linked at N340. The helical transmembrane segment at 366–386 threads the bilayer; the sequence is FQAWLSLAGCLLCATGSEAIF. The Cytoplasmic segment spans residues 387 to 400; that stretch reads ANLSYFPVRYVQSM. A helical membrane pass occupies residues 401–421; it reads FALLVLPCLVLAYLGQGAFLI. Residues 422–433 are Extracellular-facing; that stretch reads ANQNSSEQIFFS. N425 carries an N-linked (GlcNAc...) asparagine glycan. The helical transmembrane segment at 434–454 threads the bilayer; that stretch reads SIPSGVFWPVFLIANLAALIA. Over 455–490 the chain is Cytoplasmic; that stretch reads SRTMTTAIFQCLKQSIALGCFPRLKIIHTSRKFMAK. A helical membrane pass occupies residues 491-511; the sequence is IYIPVVNWFLLFSCLGFILLF. Topologically, residues 512-522 are extracellular; that stretch reads RSIYDVGNAYA. A helical transmembrane segment spans residues 523–543; it reads IAELGVMIMATVYVTIIMLLI. At 544 to 545 the chain is on the cytoplasmic side; sequence WE. The chain crosses the membrane as a helical span at residues 546-566; that stretch reads TSIVKVLSFVITFLSLELVFF. Over 567 to 572 the chain is Extracellular; sequence SSSLSS. A helical transmembrane segment spans residues 573-593; the sequence is VGDGGWALIIFASGILMVMFI. Residues 594–867 are Cytoplasmic-facing; sequence WNYGSKLKYD…VMQVRLTSYV (274 aa).

This sequence belongs to the HAK/KUP transporter (TC 2.A.72.3) family.

It localises to the membrane. Its function is as follows. High-affinity potassium transporter. This is Probable potassium transporter 15 (HAK15) from Oryza sativa subsp. japonica (Rice).